Here is a 485-residue protein sequence, read N- to C-terminus: Cobyric acid synthase (485 aa).

Positions 250-448 (TQTVAVIAYP…LHGMFEDPRV (199 aa)) constitute a GATase cobBQ-type domain. Cys334 functions as the Nucleophile in the catalytic mechanism. His440 is a catalytic residue.

This sequence belongs to the CobB/CobQ family. CobQ subfamily.

The protein operates within cofactor biosynthesis; adenosylcobalamin biosynthesis. Its function is as follows. Catalyzes amidations at positions B, D, E, and G on adenosylcobyrinic A,C-diamide. NH(2) groups are provided by glutamine, and one molecule of ATP is hydrogenolyzed for each amidation. In Polaromonas naphthalenivorans (strain CJ2), this protein is Cobyric acid synthase.